The chain runs to 807 residues: Glycerol-3-phosphate acyltransferase (807 aa).

The short motif at 308-313 (CHRSHM) is the HXXXXD motif element.

It belongs to the GPAT/DAPAT family.

Its subcellular location is the cell inner membrane. It catalyses the reaction sn-glycerol 3-phosphate + an acyl-CoA = a 1-acyl-sn-glycero-3-phosphate + CoA. It functions in the pathway phospholipid metabolism; CDP-diacylglycerol biosynthesis; CDP-diacylglycerol from sn-glycerol 3-phosphate: step 1/3. This is Glycerol-3-phosphate acyltransferase from Shewanella baltica (strain OS195).